A 1111-amino-acid polypeptide reads, in one-letter code: uncharacterized protein (1111 aa).

Positions 1–31 (MIRKLMKIPPFFTALFASAMFTLSVSQGVLA) are cleaved as a signal peptide. 11 helical membrane passes run 490–510 (LPYLLMYFLGLFIVGGAIFKF), 538–558 (LALLLTAFLTLSSTLWFLAVC), 572–592 (FWHWSFSMAGYWWFFTFWISL), 620–640 (IIVVVVLLLNTSVFSNVTDAG), 644–664 (DVLGQINTIAALIFCAAIIAP), 694–714 (IPVGLIVLIVLGYYYTALNLI), 797–817 (FIWTALLGIFYYVWSDLVTVV), 840–860 (SITLFNLLVALVIVGITYVLV), 885–905 (ITTLLTYIFIAIGGAWAFATL), 922–942 (GLGFGMQEIFANFVSGIILLF), and 1003–1023 (LVISVGVAYGSDLTLVRQLLL).

The protein belongs to the MscS (TC 1.A.23) family.

It localises to the cell membrane. This is an uncharacterized protein from Haemophilus influenzae (strain ATCC 51907 / DSM 11121 / KW20 / Rd).